The sequence spans 2222 residues: Protein SWEETIE (2222 aa).

HEAT repeat units follow at residues 37-75 (LLCF…LVTL), 228-265 (SEFD…LGMH), 331-368 (SELQ…GVID), 510-540 (PARL…SEKE), 541-578 (AGWL…GNPE), 611-648 (CNDG…LVDI), 768-807 (QGML…GLKA), 898-936 (MALS…TIEA), 968-1008 (QGIG…WQEI), and 1029-1066 (VSVH…KDPV). The disordered stretch occupies residues 1133–1165 (IAENDPAYTRENLGDDDEDMVSSSSGKSIRANP). HEAT repeat units follow at residues 1238 to 1269 (MRPI…LLEQ), 1270 to 1306 (YQAQ…TSGI), 1312 to 1354 (VAVK…AHAS), 1372 to 1410 (VEFE…NLKK), 1434 to 1474 (EAWP…LEAE), 1550 to 1586 (DLCQ…NCPK), 1783 to 1820 (VMLK…RYNN), 1836 to 1874 (GDIV…HSIT), 1880 to 1917 (GFMS…LVSH), and 1966 to 2006 (AMDI…QVST). Residues 1992-2203 (EALSTMPTSF…DESSKEHVGA (212 aa)) form a disordered region. Polar residues predominate over residues 1996 to 2009 (TMPTSFNQVSTVES). Acidic residues predominate over residues 2010 to 2027 (GTDEEEEEEEDDDDDDWD). The span at 2028–2040 (TFQSFPASTNLEG) shows a compositional bias: polar residues. The segment covering 2062-2072 (QDDESNAEETD) has biased composition (acidic residues). 2 stretches are compositionally biased toward basic and acidic residues: residues 2073-2096 (DQHL…SKEV) and 2108-2124 (TRED…EETV). Residues 2150–2164 (NEQSVESKNLESENI) are compositionally biased toward polar residues. Basic and acidic residues predominate over residues 2191-2202 (SPEDESSKEHVG).

This sequence belongs to the HEATR5 family.

Functionally, may regulate multiple metabolic, hormonal and stress-related pathways. Required for carbohydrate metabolism and homoeostasis. May also monitor ethylene biosynthesis and senescence. The protein is Protein SWEETIE of Arabidopsis thaliana (Mouse-ear cress).